Here is a 388-residue protein sequence, read N- to C-terminus: Ferrochelatase (388 aa).

2 residues coordinate Fe cation: H196 and E277.

It belongs to the ferrochelatase family.

It localises to the cytoplasm. The enzyme catalyses heme b + 2 H(+) = protoporphyrin IX + Fe(2+). The protein operates within porphyrin-containing compound metabolism; protoheme biosynthesis; protoheme from protoporphyrin-IX: step 1/1. In terms of biological role, catalyzes the ferrous insertion into protoporphyrin IX. In Nostoc punctiforme (strain ATCC 29133 / PCC 73102), this protein is Ferrochelatase.